The chain runs to 1538 residues: Pentafunctional AROM polypeptide (1538 aa).

Positions Met1 to Asn384 are 3-dehydroquinate synthase. Residues Asp44–Asn46, Glu81–Lys84, Gly114–Val116, and Asp119 each bind NAD(+). Residue Arg130 coordinates 7-phospho-2-dehydro-3-deoxy-D-arabino-heptonate. Position 139–140 (Thr139–Thr140) interacts with NAD(+). Residues Asp146 and Lys152 each coordinate 7-phospho-2-dehydro-3-deoxy-D-arabino-heptonate. NAD(+) is bound at residue Lys161. A 7-phospho-2-dehydro-3-deoxy-D-arabino-heptonate-binding site is contributed by Asn162. NAD(+) is bound by residues Phe179–Thr182 and Asn190. Glu194 provides a ligand contact to Zn(2+). Residues Glu194–Lys197 and Lys250 contribute to the 7-phospho-2-dehydro-3-deoxy-D-arabino-heptonate site. Glu260 functions as the Proton acceptor; for 3-dehydroquinate synthase activity in the catalytic mechanism. Residues Arg264 to Asn268 and His271 contribute to the 7-phospho-2-dehydro-3-deoxy-D-arabino-heptonate site. A Zn(2+)-binding site is contributed by His271. Residue His275 is the Proton acceptor; for 3-dehydroquinate synthase activity of the active site. Positions 287 and 356 each coordinate 7-phospho-2-dehydro-3-deoxy-D-arabino-heptonate. His287 lines the Zn(2+) pocket. The tract at residues Val397–Val842 is EPSP synthase. Catalysis depends on Cys824, which acts as the For EPSP synthase activity. The shikimate kinase stretch occupies residues Ala866–Ser973. Gly872 to Thr879 contributes to the ATP binding site. Positions Leu974 to Glu1194 are 3-dehydroquinase. Residue His1097 is the Proton acceptor; for 3-dehydroquinate dehydratase activity of the active site. The Schiff-base intermediate with substrate; for 3-dehydroquinate dehydratase activity role is filled by Lys1125. The segment at Ala1207–Ser1538 is shikimate dehydrogenase.

It in the N-terminal section; belongs to the sugar phosphate cyclases superfamily. Dehydroquinate synthase family. This sequence in the 2nd section; belongs to the EPSP synthase family. In the 3rd section; belongs to the shikimate kinase family. The protein in the 4th section; belongs to the type-I 3-dehydroquinase family. It in the C-terminal section; belongs to the shikimate dehydrogenase family. As to quaternary structure, homodimer. It depends on Zn(2+) as a cofactor.

Its subcellular location is the cytoplasm. It carries out the reaction 7-phospho-2-dehydro-3-deoxy-D-arabino-heptonate = 3-dehydroquinate + phosphate. It catalyses the reaction 3-dehydroquinate = 3-dehydroshikimate + H2O. The catalysed reaction is shikimate + NADP(+) = 3-dehydroshikimate + NADPH + H(+). The enzyme catalyses shikimate + ATP = 3-phosphoshikimate + ADP + H(+). It carries out the reaction 3-phosphoshikimate + phosphoenolpyruvate = 5-O-(1-carboxyvinyl)-3-phosphoshikimate + phosphate. The protein operates within metabolic intermediate biosynthesis; chorismate biosynthesis; chorismate from D-erythrose 4-phosphate and phosphoenolpyruvate: step 2/7. It participates in metabolic intermediate biosynthesis; chorismate biosynthesis; chorismate from D-erythrose 4-phosphate and phosphoenolpyruvate: step 3/7. It functions in the pathway metabolic intermediate biosynthesis; chorismate biosynthesis; chorismate from D-erythrose 4-phosphate and phosphoenolpyruvate: step 4/7. Its pathway is metabolic intermediate biosynthesis; chorismate biosynthesis; chorismate from D-erythrose 4-phosphate and phosphoenolpyruvate: step 5/7. The protein operates within metabolic intermediate biosynthesis; chorismate biosynthesis; chorismate from D-erythrose 4-phosphate and phosphoenolpyruvate: step 6/7. Functionally, the AROM polypeptide catalyzes 5 consecutive enzymatic reactions in prechorismate polyaromatic amino acid biosynthesis. The polypeptide is Pentafunctional AROM polypeptide (Ajellomyces capsulatus (strain NAm1 / WU24) (Darling's disease fungus)).